Reading from the N-terminus, the 355-residue chain is Erythronate-4-phosphate dehydrogenase (355 aa).

Residues S45 and T66 each contribute to the substrate site. Residue D146 participates in NAD(+) binding. R206 is a catalytic residue. Residue D229 coordinates NAD(+). E234 is a catalytic residue. H251 serves as the catalytic Proton donor. G254 is a binding site for NAD(+). Residue Y255 coordinates substrate.

Belongs to the D-isomer specific 2-hydroxyacid dehydrogenase family. PdxB subfamily. Homodimer.

Its subcellular location is the cytoplasm. The enzyme catalyses 4-phospho-D-erythronate + NAD(+) = (R)-3-hydroxy-2-oxo-4-phosphooxybutanoate + NADH + H(+). It participates in cofactor biosynthesis; pyridoxine 5'-phosphate biosynthesis; pyridoxine 5'-phosphate from D-erythrose 4-phosphate: step 2/5. In terms of biological role, catalyzes the oxidation of erythronate-4-phosphate to 3-hydroxy-2-oxo-4-phosphonooxybutanoate. This is Erythronate-4-phosphate dehydrogenase from Acinetobacter baumannii (strain ACICU).